A 524-amino-acid chain; its full sequence is MSDNGELEDKPPAPPVRMSSTIFSTGGKDPLSANHSLKPLPSVPEEKKPRNKIISIFSGTEKGSKKKEKERPEISPPSDFEHTIHVGFDAVTGEFTGMPEQWARLLQTSNITKLEQKKNPQAVLDVLKFYDSNTVKQKYLSFTPPEKDGFPSGTPALNTKGSETSAVVTEEDDDDEDAAPPVIAPRPDHTKSIYTRSVIDPIPAPVGDSNVDSGAKSSDKQKKKAKMTDEEIMEKLRTIVSIGDPKKKYTRYEKIGQGASGTVFTATDVALGQEVAIKQINLQKQPKKELIINEILVMKELKNPNIVNFLDSYLVGDELFVVMEYLAGGSLTDVVTETCMDEAQIAAVCRECLQALEFLHANQVIHRDIKSDNVLLGMEGSVKLTDFGFCAQITPEQSKRSTMVGTPYWMAPEVVTRKAYGPKVDIWSLGIMAIEMVEGEPPYLNENPLRALYLIATNGTPELQNPEKLSPIFRDFLNRCLEMDVEKRGSAKELLQHPFLKLAKPLSSLTPLILAAKEAMKSNR.

The disordered stretch occupies residues 1 to 81 (MSDNGELEDK…PEISPPSDFE (81 aa)). An N-acetylserine modification is found at Ser2. Phosphoserine occurs at positions 2, 20, 55, and 58. Position 60 is a phosphothreonine (Thr60). The residue at position 62 (Lys62) is an N6-acetyllysine. Phosphoserine is present on Ser64. Basic and acidic residues predominate over residues 67 to 81 (KEKERPEISPPSDFE). The interval 69 to 112 (KERPEISPPSDFEHTIHVGFDAVTGEFTGMPEQWARLLQTSNIT) is GTPase-binding. The interval 69-137 (KERPEISPPS…KFYDSNTVKQ (69 aa)) is autoregulatory region. The CRIB domain occupies 74–87 (ISPPSDFEHTIHVG). Residue Lys128 is modified to N6-acetyllysine. Thr134 is subject to Phosphothreonine. Tyr139 carries the post-translational modification Phosphotyrosine. Residue Ser141 is modified to Phosphoserine. A disordered region spans residues 142 to 188 (FTPPEKDGFPSGTPALNTKGSETSAVVTEEDDDDEDAAPPVIAPRPD). Thr143 bears the Phosphothreonine mark. Residue Ser152 is modified to Phosphoserine. Phosphothreonine is present on residues Thr154, Thr159, and Thr169. Over residues 155–167 (PALNTKGSETSAV) the composition is skewed to polar residues. The span at 169-178 (TEEDDDDEDA) shows a compositional bias: acidic residues. Phosphoserine is present on Ser197. Residues 204–228 (APVGDSNVDSGAKSSDKQKKKAKMT) are disordered. The short motif at 245-251 (PKKKYTR) is the Nuclear localization signal element. A Protein kinase domain is found at 249 to 499 (YTRYEKIGQG…SAKELLQHPF (251 aa)). Residues 255–263 (IGQGASGTV) and Lys278 contribute to the ATP site. The active-site Proton acceptor is Arg367. The residue at position 402 (Thr402) is a Phosphothreonine; by autocatalysis.

It belongs to the protein kinase superfamily. STE Ser/Thr protein kinase family. STE20 subfamily. In terms of assembly, interacts tightly with GTP-bound but not GDP-bound CDC42/p21 and RAC1. Interacts with SH3MD4. Interacts with SCRIB. Interacts with ARHGEF7 and GIT1. PAK-2p34 interacts with ARHGAP10. Interacts with RAC1. Full-length PAK2 is autophosphorylated when activated by CDC42/p21. Following cleavage, both peptides, PAK-2p27 and PAK-2p34, become highly autophosphorylated. Autophosphorylation of PAK-2p27 can occur in the absence of any effectors and is dependent on phosphorylation of Thr-402, because PAK-2p27 is acting as an exogenous substrate. In terms of processing, during apoptosis proteolytically cleaved by caspase-3 or caspase-3-like proteases to yield active PAK-2p34. Post-translationally, ubiquitinated, leading to its proteasomal degradation.

Its subcellular location is the cytoplasm. The protein resides in the nucleus. It is found in the perinuclear region. The protein localises to the membrane. The catalysed reaction is L-seryl-[protein] + ATP = O-phospho-L-seryl-[protein] + ADP + H(+). The enzyme catalyses L-threonyl-[protein] + ATP = O-phospho-L-threonyl-[protein] + ADP + H(+). With respect to regulation, activated by binding small G proteins. Binding of GTP-bound CDC42 or RAC1 to the autoregulatory region releases monomers from the autoinhibited dimer, enables phosphorylation of Thr-402 and allows the kinase domain to adopt an active structure. Following caspase cleavage, autophosphorylated PAK-2p34 is constitutively active. Functionally, serine/threonine protein kinase that plays a role in a variety of different signaling pathways including cytoskeleton regulation, cell motility, cell cycle progression, apoptosis or proliferation. Acts as a downstream effector of the small GTPases CDC42 and RAC1. Activation by the binding of active CDC42 and RAC1 results in a conformational change and a subsequent autophosphorylation on several serine and/or threonine residues. Full-length PAK2 stimulates cell survival and cell growth. Phosphorylates MAPK4 and MAPK6 and activates the downstream target MAPKAPK5, a regulator of F-actin polymerization and cell migration. Phosphorylates JUN and plays an important role in EGF-induced cell proliferation. Phosphorylates many other substrates including histone H4 to promote assembly of H3.3 and H4 into nucleosomes, BAD, ribosomal protein S6, or MBP. Phosphorylates CASP7, thereby preventing its activity. Additionally, associates with ARHGEF7 and GIT1 to perform kinase-independent functions such as spindle orientation control during mitosis. On the other hand, apoptotic stimuli such as DNA damage lead to caspase-mediated cleavage of PAK2, generating PAK-2p34, an active p34 fragment that translocates to the nucleus and promotes cellular apoptosis involving the JNK signaling pathway. Caspase-activated PAK2 phosphorylates MKNK1 and reduces cellular translation. This Mus musculus (Mouse) protein is Serine/threonine-protein kinase PAK 2 (Pak2).